Consider the following 506-residue polypeptide: Anaerobic nitric oxide reductase transcription regulator NorR (506 aa).

Asp-57 carries the 4-aspartylphosphate modification. One can recognise a Sigma-54 factor interaction domain in the interval 187–416 (MIGLSPAMTQ…LEHAIHRAVV (230 aa)). Residues 215–222 (GETGTGKE) and 278–287 (ADNGTLFLDE) each bind ATP. The H-T-H motif DNA-binding region spans 481 to 500 (WAASARALETDVANLHRLAK).

It functions in the pathway nitrogen metabolism; nitric oxide reduction. Functionally, required for the expression of anaerobic nitric oxide (NO) reductase, acts as a transcriptional activator for at least the norVW operon. Activation also requires sigma-54. In Salmonella schwarzengrund (strain CVM19633), this protein is Anaerobic nitric oxide reductase transcription regulator NorR.